A 282-amino-acid chain; its full sequence is Bis(5'-nucleosyl)-tetraphosphatase, symmetrical (282 aa).

It belongs to the Ap4A hydrolase family.

The enzyme catalyses P(1),P(4)-bis(5'-adenosyl) tetraphosphate + H2O = 2 ADP + 2 H(+). Hydrolyzes diadenosine 5',5'''-P1,P4-tetraphosphate to yield ADP. This is Bis(5'-nucleosyl)-tetraphosphatase, symmetrical from Sodalis glossinidius (strain morsitans).